The following is a 655-amino-acid chain: Putative esterase (655 aa).

The helical transmembrane segment at 9–29 threads the bilayer; sequence VLSLTLIYISISIGFSVYFYV. Asparagine 71, asparagine 89, asparagine 101, asparagine 185, asparagine 386, asparagine 449, and asparagine 512 each carry an N-linked (GlcNAc...) asparagine; by host glycan. Histidine 515 serves as the catalytic Charge relay system. Asparagine 527 and asparagine 597 each carry an N-linked (GlcNAc...) asparagine; by host glycan.

The protein belongs to the type-B carboxylesterase/lipase family.

It localises to the membrane. The enzyme catalyses a carboxylic ester + H2O = an alcohol + a carboxylate + H(+). The polypeptide is Putative esterase (Noctuidae (owlet moths)).